Here is a 260-residue protein sequence, read N- to C-terminus: 14-3-3-like protein (260 aa).

The disordered stretch occupies residues 240–260; that stretch reads DMQDDGGDEIKEAAPKPDEQY. Residues 247–260 are compositionally biased toward basic and acidic residues; it reads DEIKEAAPKPDEQY.

The protein belongs to the 14-3-3 family.

This Oenothera elata subsp. hookeri (Hooker's evening primrose) protein is 14-3-3-like protein.